Reading from the N-terminus, the 162-residue chain is UPF0303 protein RL3365 (162 aa).

This sequence belongs to the UPF0303 family.

This is UPF0303 protein RL3365 from Rhizobium johnstonii (strain DSM 114642 / LMG 32736 / 3841) (Rhizobium leguminosarum bv. viciae).